A 323-amino-acid chain; its full sequence is Penicillopepsin-1 (323 aa).

S3 carries O-linked (Man...) serine glycosylation. A glycan (O-linked (Man...) threonine) is linked at T7. The Peptidase A1 domain maps to 17-320 (YITPVTIGGT…DSDGPQLGFA (304 aa)). Catalysis depends on residues D33 and D213. Residues C249 and C283 are joined by a disulfide bond.

It belongs to the peptidase A1 family. As to quaternary structure, monomer.

Its subcellular location is the secreted. It catalyses the reaction Hydrolysis of proteins with broad specificity similar to that of pepsin A, preferring hydrophobic residues at P1 and P1', but also cleaving 20-Gly-|-Glu-21 in the B chain of insulin. Clots milk, and activates trypsinogen.. In terms of biological role, secreted aspartic endopeptidase that allows assimilation of proteinaceous substrates. The scissile peptide bond is attacked by a nucleophilic water molecule activated by two aspartic residues in the active site. Shows a broad primary substrate specificity. Favors hydrophobic residues at the P1 and P1' positions, but can also activate trypsinogen and hydrolyze the B chain of insulin between positions 'Gly-20' and 'Glu-21'. This chain is Penicillopepsin-1, found in Penicillium janthinellum (Penicillium vitale).